A 288-amino-acid polypeptide reads, in one-letter code: Mortality factor 4-like protein 2 (288 aa).

Positions 1–15 are enriched in polar residues; sequence MSSRKQGSQPRGQQS. The disordered stretch occupies residues 1–113; it reads MSSRKQGSQP…RADPTVESEE (113 aa). A Phosphoserine modification is found at Ser-71. The MRG domain maps to 117–288; it reads NRMEVKVKIP…ASAEYHRKAL (172 aa).

As to quaternary structure, component of the NuA4 histone acetyltransferase complex which contains the catalytic subunit KAT5/TIP60 and the subunits EP400, TRRAP/PAF400, BRD8/SMAP, EPC1, DMAP1/DNMAP1, RUVBL1/TIP49, RUVBL2, ING3, actin, ACTL6A/BAF53A, MORF4L1/MRG15, MORF4L2/MRGX, MRGBP, YEATS4/GAS41 and VPS72/YL1. The NuA4 complex interacts with MYC and the adenovirus E1A protein. MORF4L1 may also participate in the formation of NuA4 related complexes which lack the KAT5/TIP60 catalytic subunit, but which include the SWI/SNF related protein SRCAP. Component of the MSIN3A histone deacetylase complex, which includes SIN3A, HDAC2, ARID4B, MORF4L1, RBBP4/RbAp48, and RBBP7/RbAp46. Interacts with MRFAP1 and RB1. May also interact with one or more as yet undefined members of the TLE (transducin-like enhancer of split) family of transcriptional repressors.

It localises to the nucleus. Functionally, component of the NuA4 histone acetyltransferase complex which is involved in transcriptional activation of select genes principally by acetylation of nucleosomal histone H4 and H2A. This modification may both alter nucleosome - DNA interactions and promote interaction of the modified histones with other proteins which positively regulate transcription. This complex may be required for the activation of transcriptional programs associated with oncogene and proto-oncogene mediated growth induction, tumor suppressor mediated growth arrest and replicative senescence, apoptosis, and DNA repair. The NuA4 complex ATPase and helicase activities seem to be, at least in part, contributed by the association of RUVBL1 and RUVBL2 with EP400. NuA4 may also play a direct role in DNA repair when directly recruited to sites of DNA damage. Also a component of the MSIN3A complex which acts to repress transcription by deacetylation of nucleosomal histones. The sequence is that of Mortality factor 4-like protein 2 (MORF4L2) from Homo sapiens (Human).